A 271-amino-acid polypeptide reads, in one-letter code: Thiazole synthase (271 aa).

K95 (schiff-base intermediate with DXP) is an active-site residue. 1-deoxy-D-xylulose 5-phosphate-binding positions include G156, 182-183 (AG), and 204-205 (NT).

It belongs to the ThiG family. In terms of assembly, homotetramer. Forms heterodimers with either ThiH or ThiS.

It is found in the cytoplasm. The enzyme catalyses [ThiS sulfur-carrier protein]-C-terminal-Gly-aminoethanethioate + 2-iminoacetate + 1-deoxy-D-xylulose 5-phosphate = [ThiS sulfur-carrier protein]-C-terminal Gly-Gly + 2-[(2R,5Z)-2-carboxy-4-methylthiazol-5(2H)-ylidene]ethyl phosphate + 2 H2O + H(+). The protein operates within cofactor biosynthesis; thiamine diphosphate biosynthesis. Catalyzes the rearrangement of 1-deoxy-D-xylulose 5-phosphate (DXP) to produce the thiazole phosphate moiety of thiamine. Sulfur is provided by the thiocarboxylate moiety of the carrier protein ThiS. In vitro, sulfur can be provided by H(2)S. The chain is Thiazole synthase from Shewanella amazonensis (strain ATCC BAA-1098 / SB2B).